The primary structure comprises 218 residues: Kynurenine formamidase (218 aa).

Substrate is bound at residue Trp27. Residues His57, His61, and Asp63 each coordinate Zn(2+). Residue His67 is the Proton donor/acceptor of the active site. Residues His169 and Glu181 each contribute to the Zn(2+) site.

Belongs to the Cyclase 1 superfamily. KynB family. As to quaternary structure, homodimer. Zn(2+) is required as a cofactor.

The catalysed reaction is N-formyl-L-kynurenine + H2O = L-kynurenine + formate + H(+). Its pathway is amino-acid degradation; L-tryptophan degradation via kynurenine pathway; L-kynurenine from L-tryptophan: step 2/2. With respect to regulation, inhibited by EDTA. Insensitive to phenylmethylsulfonyl fluoride (PMSF). Its function is as follows. Catalyzes the hydrolysis of N-formyl-L-kynurenine to L-kynurenine, the second step in the kynurenine pathway of tryptophan degradation. In Cupriavidus metallidurans (strain ATCC 43123 / DSM 2839 / NBRC 102507 / CH34) (Ralstonia metallidurans), this protein is Kynurenine formamidase.